A 65-amino-acid polypeptide reads, in one-letter code: Large ribosomal subunit protein uL29 (65 aa).

The tract at residues 30–49 is disordered; that stretch reads ERSSVAMGGAPSSPGKMRSI.

Belongs to the universal ribosomal protein uL29 family.

In Picrophilus torridus (strain ATCC 700027 / DSM 9790 / JCM 10055 / NBRC 100828 / KAW 2/3), this protein is Large ribosomal subunit protein uL29.